The sequence spans 770 residues: 1,4-alpha-glucan branching enzyme GlgB (770 aa).

Catalysis depends on Asp-437, which acts as the Nucleophile. Catalysis depends on Glu-488, which acts as the Proton donor.

The protein belongs to the glycosyl hydrolase 13 family. GlgB subfamily. In terms of assembly, monomer.

It catalyses the reaction Transfers a segment of a (1-&gt;4)-alpha-D-glucan chain to a primary hydroxy group in a similar glucan chain.. It functions in the pathway glycan biosynthesis; glycogen biosynthesis. Functionally, catalyzes the formation of the alpha-1,6-glucosidic linkages in glycogen by scission of a 1,4-alpha-linked oligosaccharide from growing alpha-1,4-glucan chains and the subsequent attachment of the oligosaccharide to the alpha-1,6 position. This chain is 1,4-alpha-glucan branching enzyme GlgB, found in Synechococcus sp. (strain JA-3-3Ab) (Cyanobacteria bacterium Yellowstone A-Prime).